The primary structure comprises 386 residues: Galactokinase (386 aa).

Position 35–38 (Glu35–Asp38) interacts with substrate. Gly125 to Ser131 contributes to the ATP binding site. Mg(2+) contacts are provided by Ser131 and Glu163. Residue Asp175 is the Proton acceptor of the active site. A substrate-binding site is contributed by Tyr224.

This sequence belongs to the GHMP kinase family. GalK subfamily.

Its subcellular location is the cytoplasm. It carries out the reaction alpha-D-galactose + ATP = alpha-D-galactose 1-phosphate + ADP + H(+). The protein operates within carbohydrate metabolism; galactose metabolism. In terms of biological role, catalyzes the transfer of the gamma-phosphate of ATP to D-galactose to form alpha-D-galactose-1-phosphate (Gal-1-P). In Vibrio cholerae serotype O1 (strain ATCC 39315 / El Tor Inaba N16961), this protein is Galactokinase.